We begin with the raw amino-acid sequence, 616 residues long: ATP-dependent zinc metalloprotease FtsH (616 aa).

Residues 1-8 (MRNLFKTA) are Cytoplasmic-facing. Residues 9 to 29 (TIYILIALVILLLVDIFSGGL) form a helical membrane-spanning segment. Residues 30–114 (SYNQFFSNLS…VTKEPPQVPW (85 aa)) are Extracellular-facing. The helical transmembrane segment at 115–135 (WLSTFLPMLIFAGLMIFVWIF) threads the bilayer. The Cytoplasmic segment spans residues 136 to 616 (MLQQTQGGGS…VFEDAQPQLV (481 aa)). 208–215 (GPPGTGKT) contributes to the ATP binding site. A Zn(2+)-binding site is contributed by H430. The active site involves E431. Positions 434 and 506 each coordinate Zn(2+).

This sequence in the central section; belongs to the AAA ATPase family. In the C-terminal section; belongs to the peptidase M41 family. As to quaternary structure, homohexamer. Requires Zn(2+) as cofactor.

It is found in the cell membrane. In terms of biological role, acts as a processive, ATP-dependent zinc metallopeptidase for both cytoplasmic and membrane proteins. Plays a role in the quality control of integral membrane proteins. This Caldicellulosiruptor bescii (strain ATCC BAA-1888 / DSM 6725 / KCTC 15123 / Z-1320) (Anaerocellum thermophilum) protein is ATP-dependent zinc metalloprotease FtsH.